Reading from the N-terminus, the 542-residue chain is Multidrug transporter DTR1 (542 aa).

N-linked (GlcNAc...) asparagine glycosylation is found at Asn6 and Asn46. A helical membrane pass occupies residues 80-100 (LIFLIVIYNGFLGPLAGNVFI). N-linked (GlcNAc...) asparagine glycosylation is found at Asn111 and Asn118. The next 5 helical transmembrane spans lie at 119–139 (ATVSVFMATFSISPLFWGALA), 146–166 (ILYIISISLMVIINILLASVP), 169–189 (IGSLIFLRIIQAFASSSVISL), 210–230 (FMLGPNLGPILAPIIAGLILL), and 237–257 (WLFGFLCIVSGLGLIMVILLL). N-linked (GlcNAc...) asparagine glycosylation occurs at Asn274. 4 helical membrane-spanning segments follow: residues 332 to 352 (IMTFPPVILTSIANALLFCTY), 374 to 394 (IGACYVCPGVCMLLGSQIGGH), 419 to 439 (ILTVCGVLLAIGGSIGYGWCI), and 441 to 461 (FHYHISAVLVFAGLMAFGLTW). N-linked (GlcNAc...) asparagine glycosylation is present at Asn463. The next 2 membrane-spanning stretches (helical) occupy residues 481–501 (AIAVSSFFRNIAAAISSALIA) and 511–531 (FCFLGLGLINLVSLFSILVLI).

It belongs to the major facilitator superfamily. CAR1 family.

The protein localises to the cell membrane. Functionally, plasma membrane acetic acid exporter, relieving the stress induced upon cells within hemocytes, and thus enabling increased proliferation and virulence against Galleria mellonella larvae. Confers resistance to weak acid and oxidative stress, but not to antifungal drugs. This is Multidrug transporter DTR1 from Candida glabrata (strain ATCC 2001 / BCRC 20586 / JCM 3761 / NBRC 0622 / NRRL Y-65 / CBS 138) (Yeast).